We begin with the raw amino-acid sequence, 779 residues long: Endonuclease MutS2 (779 aa).

328–335 contacts ATP; it reads GPNTGGKT. Positions 704–779 constitute a Smr domain; that stretch reads LDLRGKRYEE…GSGATIVTLG (76 aa).

It belongs to the DNA mismatch repair MutS family. MutS2 subfamily. In terms of assembly, homodimer. Binds to stalled ribosomes, contacting rRNA.

In terms of biological role, endonuclease that is involved in the suppression of homologous recombination and thus may have a key role in the control of bacterial genetic diversity. Functionally, acts as a ribosome collision sensor, splitting the ribosome into its 2 subunits. Detects stalled/collided 70S ribosomes which it binds and splits by an ATP-hydrolysis driven conformational change. Acts upstream of the ribosome quality control system (RQC), a ribosome-associated complex that mediates the extraction of incompletely synthesized nascent chains from stalled ribosomes and their subsequent degradation. Probably generates substrates for RQC. The sequence is that of Endonuclease MutS2 from Streptococcus pyogenes serotype M18 (strain MGAS8232).